Reading from the N-terminus, the 688-residue chain is Translation initiation factor IF-2 (688 aa).

The disordered stretch occupies residues K54 to N95. The span at K86 to N95 shows a compositional bias: basic and acidic residues. Positions K187 to E354 constitute a tr-type G domain. A G1 region spans residues G196–T203. G196–T203 provides a ligand contact to GTP. The interval G221–H225 is G2. The segment at D242–G245 is G3. Residues D242–H246 and N296–D299 each bind GTP. Positions N296–D299 are G4. The tract at residues S332–H334 is G5.

This sequence belongs to the TRAFAC class translation factor GTPase superfamily. Classic translation factor GTPase family. IF-2 subfamily.

The protein localises to the cytoplasm. In terms of biological role, one of the essential components for the initiation of protein synthesis. Protects formylmethionyl-tRNA from spontaneous hydrolysis and promotes its binding to the 30S ribosomal subunits. Also involved in the hydrolysis of GTP during the formation of the 70S ribosomal complex. This is Translation initiation factor IF-2 from Clostridium botulinum (strain Okra / Type B1).